Consider the following 389-residue polypeptide: 8-amino-7-oxononanoate synthase (389 aa).

Arg-18 contacts substrate. 104–105 provides a ligand contact to pyridoxal 5'-phosphate; it reads GY. Residue His-129 coordinates substrate. The pyridoxal 5'-phosphate site is built by Ser-176, His-204, and Thr-232. The residue at position 235 (Lys-235) is an N6-(pyridoxal phosphate)lysine. Thr-351 contacts substrate.

It belongs to the class-II pyridoxal-phosphate-dependent aminotransferase family. BioF subfamily. In terms of assembly, homodimer. Requires pyridoxal 5'-phosphate as cofactor.

It carries out the reaction 6-carboxyhexanoyl-[ACP] + L-alanine + H(+) = (8S)-8-amino-7-oxononanoate + holo-[ACP] + CO2. The protein operates within cofactor biosynthesis; biotin biosynthesis. Its function is as follows. Catalyzes the decarboxylative condensation of pimeloyl-[acyl-carrier protein] and L-alanine to produce 8-amino-7-oxononanoate (AON), [acyl-carrier protein], and carbon dioxide. This is 8-amino-7-oxononanoate synthase from Citrifermentans bemidjiense (strain ATCC BAA-1014 / DSM 16622 / JCM 12645 / Bem) (Geobacter bemidjiensis).